The sequence spans 318 residues: Acetyl-coenzyme A carboxylase carboxyl transferase subunit alpha (318 aa).

One can recognise a CoA carboxyltransferase C-terminal domain in the interval K38 to A292.

Belongs to the AccA family. Acetyl-CoA carboxylase is a heterohexamer composed of biotin carboxyl carrier protein (AccB), biotin carboxylase (AccC) and two subunits each of ACCase subunit alpha (AccA) and ACCase subunit beta (AccD).

The protein resides in the cytoplasm. It catalyses the reaction N(6)-carboxybiotinyl-L-lysyl-[protein] + acetyl-CoA = N(6)-biotinyl-L-lysyl-[protein] + malonyl-CoA. The protein operates within lipid metabolism; malonyl-CoA biosynthesis; malonyl-CoA from acetyl-CoA: step 1/1. Its function is as follows. Component of the acetyl coenzyme A carboxylase (ACC) complex. First, biotin carboxylase catalyzes the carboxylation of biotin on its carrier protein (BCCP) and then the CO(2) group is transferred by the carboxyltransferase to acetyl-CoA to form malonyl-CoA. The sequence is that of Acetyl-coenzyme A carboxylase carboxyl transferase subunit alpha from Listeria monocytogenes serotype 4b (strain CLIP80459).